The chain runs to 117 residues: UPF0122 protein Teth39_1278 (117 aa).

It belongs to the UPF0122 family.

Functionally, might take part in the signal recognition particle (SRP) pathway. This is inferred from the conservation of its genetic proximity to ftsY/ffh. May be a regulatory protein. The polypeptide is UPF0122 protein Teth39_1278 (Thermoanaerobacter pseudethanolicus (strain ATCC 33223 / 39E) (Clostridium thermohydrosulfuricum)).